The sequence spans 200 residues: Integrin beta-1-binding protein 1 (200 aa).

A compositionally biased stretch (basic residues) spans 1-10 (MFRKGKKRHS). The tract at residues 1 to 56 (MFRKGKKRHSSSSSQSSEISTKSKSVDSSLGGLSRSSTVASLDTDSTKSSGQSNNN) is disordered. The Nuclear localization signal motif lies at 6–7 (KK). Residues 11 to 29 (SSSSQSSEISTKSKSVDSS) are compositionally biased toward low complexity. Positions 34–56 (SRSSTVASLDTDSTKSSGQSNNN) are enriched in polar residues. A Phosphothreonine; by CaMK2 modification is found at threonine 38. Serine 41 bears the Phosphoserine mark. One can recognise a PID domain in the interval 58 to 200 (DTCAEFRIKY…FDSVLTSEKP (143 aa)). Residues 136–139 (YLII) form an interaction with KRIT1 region. The tract at residues 139–141 (IRM) is interaction with ITGB1.

Interacts (via N-terminus and PTB domain) with ROCK1. Found in a complex, at least composed of ITGB1BP1, KRIT1 and RAP1A. Interacts (via C-terminal region) with ITGB1 (via C-terminal cytoplasmic tail); the interaction prevents talin TLN1 binding to ITGB1 and KRIT1 and ITGB1 compete for the same binding site. Interacts with KRIT1 (via N-terminal NPXY motif); the interaction induces the opening conformation of KRIT1 and KRIT1 and ITGB1 compete for the same binding site. Isoform 2 does not interact with ITGB1. Interacts with CDC42 (GTP- or GDP-bound form); the interaction is increased with the CDC42-membrane bound forms and prevents both CDC42 activation and cell spreading. Interacts (via C-terminal domain region) with NME2. Interacts with FERMT2 and RAC1. In terms of processing, phosphorylation at Thr-38 seems to enhance integrin alpha5beta1-mediated cell adhesion. The degree of phosphorylation is regulated by integrin-dependent cell-matrix interaction.

The protein localises to the nucleus. It is found in the cytoplasm. Its subcellular location is the cytoskeleton. It localises to the cell membrane. The protein resides in the cell projection. The protein localises to the lamellipodium. It is found in the ruffle. Functionally, key regulator of the integrin-mediated cell-matrix interaction signaling by binding to the ITGB1 cytoplasmic tail and preventing the activation of integrin alpha-5/beta-1 (heterodimer of ITGA5 and ITGB1) by talin or FERMT1. Plays a role in cell proliferation, differentiation, spreading, adhesion and migration in the context of mineralization and bone development and angiogenesis. Stimulates cellular proliferation in a fibronectin-dependent manner. Involved in the regulation of beta-1 integrin-containing focal adhesion (FA) site dynamics by controlling its assembly rate during cell adhesion; inhibits beta-1 integrin clustering within FA by directly competing with talin TLN1, and hence stimulates osteoblast spreading and migration in a fibronectin- and/or collagen-dependent manner. Acts as a guanine nucleotide dissociation inhibitor (GDI) by regulating Rho family GTPases during integrin-mediated cell matrix adhesion; reduces the level of active GTP-bound form of both CDC42 and RAC1 GTPases upon cell adhesion to fibronectin. Stimulates the release of active CDC42 from the membranes to maintain it in an inactive cytoplasmic pool. Participates in the translocation of the Rho-associated protein kinase ROCK1 to membrane ruffles at cell leading edges of the cell membrane, leading to an increase of myoblast cell migration on laminin. Plays a role in bone mineralization at a late stage of osteoblast differentiation; modulates the dynamic formation of focal adhesions into fibrillar adhesions, which are adhesive structures responsible for fibronectin deposition and fibrillogenesis. Plays a role in blood vessel development; acts as a negative regulator of angiogenesis by attenuating endothelial cell proliferation and migration, lumen formation and sprouting angiogenesis by promoting AKT phosphorylation and inhibiting ERK1/2 phosphorylation through activation of the Notch signaling pathway. Promotes transcriptional activity of the MYC promoter. In Bos taurus (Bovine), this protein is Integrin beta-1-binding protein 1 (ITGB1BP1).